Consider the following 679-residue polypeptide: UvrABC system protein B (679 aa).

The Helicase ATP-binding domain maps to 25 to 412 (EGVNQGQRYQ…DGHLAEQVIR (388 aa)). Residue 38 to 45 (GATGTGKT) participates in ATP binding. A Beta-hairpin motif is present at residues 91–114 (YYDYYQPEAYVPVSDTYIAKTSSI). The Helicase C-terminal domain occupies 429 to 591 (QVDDLLAEIR…IVPRPAGKRA (163 aa)). The region spanning 639-674 (PELIDQLETKMKEAAKNLNFEEAASLRDRIKKFRQK) is the UVR domain.

It belongs to the UvrB family. Forms a heterotetramer with UvrA during the search for lesions. Interacts with UvrC in an incision complex.

The protein localises to the cytoplasm. In terms of biological role, the UvrABC repair system catalyzes the recognition and processing of DNA lesions. A damage recognition complex composed of 2 UvrA and 2 UvrB subunits scans DNA for abnormalities. Upon binding of the UvrA(2)B(2) complex to a putative damaged site, the DNA wraps around one UvrB monomer. DNA wrap is dependent on ATP binding by UvrB and probably causes local melting of the DNA helix, facilitating insertion of UvrB beta-hairpin between the DNA strands. Then UvrB probes one DNA strand for the presence of a lesion. If a lesion is found the UvrA subunits dissociate and the UvrB-DNA preincision complex is formed. This complex is subsequently bound by UvrC and the second UvrB is released. If no lesion is found, the DNA wraps around the other UvrB subunit that will check the other stand for damage. In Prochlorococcus marinus (strain MIT 9313), this protein is UvrABC system protein B.